A 130-amino-acid chain; its full sequence is Glycine cleavage system H protein (130 aa).

Residues 24–106 (SVTVGITEHA…YGDGWIMRIQ (83 aa)) form the Lipoyl-binding domain. Lys-65 bears the N6-lipoyllysine mark.

Belongs to the GcvH family. As to quaternary structure, the glycine cleavage system is composed of four proteins: P, T, L and H. (R)-lipoate serves as cofactor.

The glycine cleavage system catalyzes the degradation of glycine. The H protein shuttles the methylamine group of glycine from the P protein to the T protein. In Halorhodospira halophila (strain DSM 244 / SL1) (Ectothiorhodospira halophila (strain DSM 244 / SL1)), this protein is Glycine cleavage system H protein.